The following is a 325-amino-acid chain: Eukaryotic translation initiation factor 3 subunit I (325 aa).

WD repeat units follow at residues 8–47, 50–91, 144–183, and 186–225; these read GHERSITQIKYNREGDLLFTVAKDPIVNVWYSVNGERLGT, GHTG…ALLK, CNDSKITSAVWGPLGECVIAGHESGELNQYSAKSGEVLVN, and EHSRQINDIQLSRDMTMFVTASKDNTAKLFDSTTLEHQKT. Thr219 is modified (phosphothreonine). Lys264 bears the N6-acetyllysine mark. A Glycyl lysine isopeptide (Lys-Gly) (interchain with G-Cter in ubiquitin) cross-link involves residue Lys282. Residues 283–324 form a WD 5 repeat; the sequence is GHFGPINSVAFHPDGKSYSSGGEDGYVRIHYFDPQYFEFEFE. Tyr308 is subject to Phosphotyrosine.

It belongs to the eIF-3 subunit I family. As to quaternary structure, component of the eukaryotic translation initiation factor 3 (eIF-3) complex, which is composed of 13 subunits: EIF3A, EIF3B, EIF3C, EIF3D, EIF3E, EIF3F, EIF3G, EIF3H, EIF3I, EIF3J, EIF3K, EIF3L and EIF3M. The eIF-3 complex appears to include 3 stable modules: module A is composed of EIF3A, EIF3B, EIF3G and EIF3I; module B is composed of EIF3F, EIF3H, and EIF3M; and module C is composed of EIF3C, EIF3D, EIF3E, EIF3K and EIF3L. EIF3C of module C binds EIF3B of module A and EIF3H of module B, thereby linking the three modules. EIF3J is a labile subunit that binds to the eIF-3 complex via EIF3B. The eIF-3 complex may interact with RPS6KB1 under conditions of nutrient depletion. Mitogenic stimulation may lead to binding and activation of a complex composed of MTOR and RPTOR, leading to phosphorylation and release of RPS6KB1 and binding of EIF4B to eIF-3. Post-translationally, phosphorylated by TGF-beta type II receptor.

It localises to the cytoplasm. In terms of biological role, component of the eukaryotic translation initiation factor 3 (eIF-3) complex, which is required for several steps in the initiation of protein synthesis. The eIF-3 complex associates with the 40S ribosome and facilitates the recruitment of eIF-1, eIF-1A, eIF-2:GTP:methionyl-tRNAi and eIF-5 to form the 43S pre-initiation complex (43S PIC). The eIF-3 complex stimulates mRNA recruitment to the 43S PIC and scanning of the mRNA for AUG recognition. The eIF-3 complex is also required for disassembly and recycling of post-termination ribosomal complexes and subsequently prevents premature joining of the 40S and 60S ribosomal subunits prior to initiation. The eIF-3 complex specifically targets and initiates translation of a subset of mRNAs involved in cell proliferation, including cell cycling, differentiation and apoptosis, and uses different modes of RNA stem-loop binding to exert either translational activation or repression. The chain is Eukaryotic translation initiation factor 3 subunit I (Eif3i) from Mus musculus (Mouse).